Consider the following 129-residue polypeptide: UPF0212 protein MM_2357 (129 aa).

This sequence belongs to the UPF0212 family.

This chain is UPF0212 protein MM_2357, found in Methanosarcina mazei (strain ATCC BAA-159 / DSM 3647 / Goe1 / Go1 / JCM 11833 / OCM 88) (Methanosarcina frisia).